The chain runs to 349 residues: Phosphate acyltransferase (349 aa).

It belongs to the PlsX family. As to quaternary structure, homodimer. Probably interacts with PlsY.

The protein resides in the cytoplasm. It carries out the reaction a fatty acyl-[ACP] + phosphate = an acyl phosphate + holo-[ACP]. It functions in the pathway lipid metabolism; phospholipid metabolism. Its function is as follows. Catalyzes the reversible formation of acyl-phosphate (acyl-PO(4)) from acyl-[acyl-carrier-protein] (acyl-ACP). This enzyme utilizes acyl-ACP as fatty acyl donor, but not acyl-CoA. The protein is Phosphate acyltransferase of Akkermansia muciniphila (strain ATCC BAA-835 / DSM 22959 / JCM 33894 / BCRC 81048 / CCUG 64013 / CIP 107961 / Muc).